Here is a 363-residue protein sequence, read N- to C-terminus: MSFEKFFNTAVSAWMSQEGPDSDIVLSSRIRLARNIVDFRFPTLFSSEEAMQIVALFERTFAYRSYGGAGRFELLKMSELQPIEKRVLVEKHLISPHLAEDSPFGACLLSENEEISIMINEEDHIRIQCLFPGLQLAEALEAASELDDWIEGHVNYAFDERLGYLTSCPTNVGTGLRASVMMHLPALVLTQQINRIIPAINQLGLVVRGTYGEGSEALGNIFQISNQLTLGKSEEDIIADLHTIVQQLIAQERAARQALVKTLGIQLEDKVFRSYGILANCRVIESKEAAQCLSDVRLGIDLGYIKNVSRNILNELMILTQPGFLQQYAGGALRPEERDVRRAALIRERLKMEERRKMEGDER.

The region spanning 24 to 255 is the Phosphagen kinase C-terminal domain; that stretch reads IVLSSRIRLA…QQLIAQERAA (232 aa). Residues 27–31, histidine 92, arginine 126, 177–181, and 208–213 each bind ATP; these read SSRIR, RASVM, and RGTYGE. An RDXXRA motif of the pArg binding pocket involved in allosteric regulation motif is present at residues 338–343; the sequence is RDVRRA.

It belongs to the ATP:guanido phosphotransferase family.

It carries out the reaction L-arginyl-[protein] + ATP = N(omega)-phospho-L-arginyl-[protein] + ADP + H(+). Its activity is regulated as follows. Appears to be allosterically activated by the binding of pArg-containing polypeptides to the pArg-binding pocket localized in the C-terminal domain of McsB. Functionally, catalyzes the specific phosphorylation of arginine residues in a large number of proteins. Is part of the bacterial stress response system. Protein arginine phosphorylation has a physiologically important role and is involved in the regulation of many critical cellular processes, such as protein homeostasis, motility, competence, and stringent and stress responses, by regulating gene expression and protein activity. The chain is Protein-arginine kinase from Geobacillus thermodenitrificans (strain NG80-2).